We begin with the raw amino-acid sequence, 308 residues long: Eukaryotic translation initiation factor 3 subunit G-B (308 aa).

Disordered stretches follow at residues 1–35 (MPTG…KQDP) and 176–227 (STAD…DDNA). The span at 185-194 (GAEPEPAQAP) shows a compositional bias: low complexity. Over residues 209–227 (GGSRRGESMQPNRRADDNA) the composition is skewed to basic and acidic residues. Residues 227-305 (ATIRVTNLSE…LILNVEWAKP (79 aa)) form the RRM domain.

It belongs to the eIF-3 subunit G family. Component of the eukaryotic translation initiation factor 3 (eIF-3) complex, which is composed of 13 subunits: eif3a, eif3b, eif3c, eif3d, eif3e, eif3f, eif3g, eif3h, eif3i, eif3j, eif3k, eif3l and eif3m.

Its subcellular location is the cytoplasm. Its function is as follows. RNA-binding component of the eukaryotic translation initiation factor 3 (eIF-3) complex, which is involved in protein synthesis of a specialized repertoire of mRNAs and, together with other initiation factors, stimulates binding of mRNA and methionyl-tRNAi to the 40S ribosome. The eIF-3 complex specifically targets and initiates translation of a subset of mRNAs involved in cell proliferation. This subunit can bind 18S rRNA. The sequence is that of Eukaryotic translation initiation factor 3 subunit G-B (eif3g-b) from Xenopus laevis (African clawed frog).